We begin with the raw amino-acid sequence, 106 residues long: UPF0060 membrane protein Rleg2_1018 (106 aa).

The next 4 helical transmembrane spans lie at 4–24 (IIYA…WAWL), 30–50 (VWWL…LTLV), 58–78 (TFAA…WLVE), and 86–106 (DIGG…GPRG).

The protein belongs to the UPF0060 family.

The protein resides in the cell inner membrane. This Rhizobium leguminosarum bv. trifolii (strain WSM2304) protein is UPF0060 membrane protein Rleg2_1018.